The chain runs to 85 residues: Large ribosomal subunit protein eL43 (85 aa).

Zn(2+)-binding residues include Cys-32, Cys-35, Cys-50, and Cys-53. The segment at 32–53 adopts a C4-type zinc-finger fold; sequence CTFCGKTKMKRRAVGIWHCGSC.

It belongs to the eukaryotic ribosomal protein eL43 family. In terms of assembly, component of the large ribosomal subunit.

It is found in the cytoplasm. Functionally, component of the large ribosomal subunit. The ribosome is a large ribonucleoprotein complex responsible for the synthesis of proteins in the cell. This chain is Large ribosomal subunit protein eL43 (rpl37a), found in Myxine glutinosa (Atlantic hagfish).